Consider the following 351-residue polypeptide: Phenylacetaldoxime dehydratase (351 aa).

This sequence belongs to the heme-containing dehydratase family. Monomer. Requires heme b as cofactor.

The catalysed reaction is (Z)-phenylacetaldehyde oxime = phenylacetonitrile + H2O. Its function is as follows. Catalyzes the stoichiometric dehydration of Z-phenylacetaldoxime to phenylacetonitrile. Prefers the Z-form of phenylacetaldoxime over its E-isomer. This is Phenylacetaldoxime dehydratase from Bacillus sp. (strain OxB-1).